Here is a 159-residue protein sequence, read N- to C-terminus: Growth arrest and DNA damage-inducible protein GADD45 gamma (159 aa).

The homodimerization stretch occupies residues 43–86 (VYESAKVLNVDPDNVTFCVLAADEEDEGDIALQIHFTLIQAFCC).

Belongs to the GADD45 family. As to quaternary structure, undergoes concentration-dependent homodimerization, which is required for growth inhibititory activity and enhances interaction with PCNA. Interacts with GADD45GIP1. Interacts with PCNA.

In terms of biological role, involved in the regulation of growth and apoptosis. Mediates activation of stress-responsive MTK1/MEKK4 MAPKKK. The chain is Growth arrest and DNA damage-inducible protein GADD45 gamma (Gadd45g) from Rattus norvegicus (Rat).